The primary structure comprises 305 residues: Ribosomal RNA small subunit methyltransferase H (305 aa).

S-adenosyl-L-methionine contacts are provided by residues 33-35 (GGY), aspartate 51, phenylalanine 78, aspartate 96, and glutamine 103.

It belongs to the methyltransferase superfamily. RsmH family.

It localises to the cytoplasm. It carries out the reaction cytidine(1402) in 16S rRNA + S-adenosyl-L-methionine = N(4)-methylcytidine(1402) in 16S rRNA + S-adenosyl-L-homocysteine + H(+). Functionally, specifically methylates the N4 position of cytidine in position 1402 (C1402) of 16S rRNA. This Rickettsia bellii (strain RML369-C) protein is Ribosomal RNA small subunit methyltransferase H.